We begin with the raw amino-acid sequence, 78 residues long: U7-lycotoxin-Ls1a (78 aa).

The signal sequence occupies residues 1–22 (MKLIIFTGLALLLIVSLIDVEA). Positions 23 to 26 (QNEG) are excised as a propeptide.

Belongs to the neurotoxin 19 (CSTX) family. 07 (U7-Lctx) subfamily. Contains 4 disulfide bonds. In terms of tissue distribution, expressed by the venom gland.

The protein localises to the secreted. The protein is U7-lycotoxin-Ls1a of Lycosa singoriensis (Wolf spider).